Here is a 208-residue protein sequence, read N- to C-terminus: MADQLTIALSKGRIYKDTLPLLEAANIIPQEDPSKSRKLIIPTNHEHVRLLIVRATDAPTYVAHGAADIGVAGKDVLMEAPSDNLNELLDLQIAKCKLMVAGPKEAKPHGHRLKIATKYIQSAKAYYAQKGQQVDLIKLYGSMEIAPLIDLADKIVDLVDTGNTLKANGLVPEEHIADISSRLIVNEHAYKTKFKQINDIVEKFRSAI.

It belongs to the ATP phosphoribosyltransferase family. Short subfamily. Heteromultimer composed of HisG and HisZ subunits.

It is found in the cytoplasm. The catalysed reaction is 1-(5-phospho-beta-D-ribosyl)-ATP + diphosphate = 5-phospho-alpha-D-ribose 1-diphosphate + ATP. The protein operates within amino-acid biosynthesis; L-histidine biosynthesis; L-histidine from 5-phospho-alpha-D-ribose 1-diphosphate: step 1/9. Functionally, catalyzes the condensation of ATP and 5-phosphoribose 1-diphosphate to form N'-(5'-phosphoribosyl)-ATP (PR-ATP). Has a crucial role in the pathway because the rate of histidine biosynthesis seems to be controlled primarily by regulation of HisG enzymatic activity. This chain is ATP phosphoribosyltransferase, found in Hydrogenovibrio crunogenus (strain DSM 25203 / XCL-2) (Thiomicrospira crunogena).